The chain runs to 204 residues: Holliday junction branch migration complex subunit RuvA (204 aa).

The segment at 1–65 is domain I; the sequence is MIGRLRGAVA…SAGLRLYGFG (65 aa). The segment at 66-142 is domain II; it reads TREDRRAFVL…PITDGPVLMT (77 aa). Residues 143–152 form a flexible linker region; that stretch reads APGAVAAAPA. A domain III region spans residues 152–204; it reads AKAAPTGDAVAALMGLGVAEVNARRVVEAAAAKLGDEATVQALIKAGLQELGR.

The protein belongs to the RuvA family. Homotetramer. Forms an RuvA(8)-RuvB(12)-Holliday junction (HJ) complex. HJ DNA is sandwiched between 2 RuvA tetramers; dsDNA enters through RuvA and exits via RuvB. An RuvB hexamer assembles on each DNA strand where it exits the tetramer. Each RuvB hexamer is contacted by two RuvA subunits (via domain III) on 2 adjacent RuvB subunits; this complex drives branch migration. In the full resolvosome a probable DNA-RuvA(4)-RuvB(12)-RuvC(2) complex forms which resolves the HJ.

It is found in the cytoplasm. The RuvA-RuvB-RuvC complex processes Holliday junction (HJ) DNA during genetic recombination and DNA repair, while the RuvA-RuvB complex plays an important role in the rescue of blocked DNA replication forks via replication fork reversal (RFR). RuvA specifically binds to HJ cruciform DNA, conferring on it an open structure. The RuvB hexamer acts as an ATP-dependent pump, pulling dsDNA into and through the RuvAB complex. HJ branch migration allows RuvC to scan DNA until it finds its consensus sequence, where it cleaves and resolves the cruciform DNA. The sequence is that of Holliday junction branch migration complex subunit RuvA from Caulobacter sp. (strain K31).